The sequence spans 159 residues: ATP synthase subunit b (159 aa).

Residues V4–L24 form a helical membrane-spanning segment.

Belongs to the ATPase B chain family. In terms of assembly, F-type ATPases have 2 components, F(1) - the catalytic core - and F(0) - the membrane proton channel. F(1) has five subunits: alpha(3), beta(3), gamma(1), delta(1), epsilon(1). F(0) has three main subunits: a(1), b(2) and c(10-14). The alpha and beta chains form an alternating ring which encloses part of the gamma chain. F(1) is attached to F(0) by a central stalk formed by the gamma and epsilon chains, while a peripheral stalk is formed by the delta and b chains.

The protein resides in the cell inner membrane. Functionally, f(1)F(0) ATP synthase produces ATP from ADP in the presence of a proton or sodium gradient. F-type ATPases consist of two structural domains, F(1) containing the extramembraneous catalytic core and F(0) containing the membrane proton channel, linked together by a central stalk and a peripheral stalk. During catalysis, ATP synthesis in the catalytic domain of F(1) is coupled via a rotary mechanism of the central stalk subunits to proton translocation. Component of the F(0) channel, it forms part of the peripheral stalk, linking F(1) to F(0). This chain is ATP synthase subunit b, found in Acidithiobacillus ferrooxidans (strain ATCC 23270 / DSM 14882 / CIP 104768 / NCIMB 8455) (Ferrobacillus ferrooxidans (strain ATCC 23270)).